Consider the following 420-residue polypeptide: Odorant receptor 63a (420 aa).

Over 1-43 the chain is Cytoplasmic; the sequence is MYSPEEAAELKRRNYRSIREMIRLSYTVGFNLLDPSRCGQVLR. The helical transmembrane segment at 44–64 threads the bilayer; sequence IWTIVLSVSSLASLYGHWQML. Topologically, residues 65 to 76 are extracellular; sequence ARYIHDIPRIGE. Residues 77-97 form a helical membrane-spanning segment; that stretch reads TAGTALQFLTSIAKMWYFLFA. Over 98–150 the chain is Cytoplasmic; the sequence is HRQIYELLRKARCHELLQKCELFERMSDLPVIKEIRQQVESTMNRYWASTRRQ. The helical transmembrane segment at 151-171 threads the bilayer; sequence ILIYLYSCICITTNYFINSFV. Over 172 to 217 the chain is Extracellular; it reads INLYRYFTKPKGSYDIMLPLPSLYPAWEHKGLEFPYYHIQMYLETC. The helical transmembrane segment at 218 to 238 threads the bilayer; the sequence is SLYICGMCAVSFDGVFIVLCL. The Cytoplasmic segment spans residues 239 to 296; that stretch reads HSVGLMRSLNQMVEQATSELVPPDRRVEYLRCCIYQYQRVANFATEVNNCFRHITFTQ. The helical transmembrane segment at 297–317 threads the bilayer; that stretch reads FLLSLFNWGLALFQMSVGLGN. Residue Asn-318 is glycosylated (N-linked (GlcNAc...) asparagine). Residues 318–320 lie on the Extracellular side of the membrane; it reads NSS. Residues 321–341 form a helical membrane-spanning segment; sequence ITMIRMTMYLVAAGYQIVVYC. At 342–387 the chain is on the cytoplasmic side; that stretch reads YNGQRFATASEEIANAFYQVRWYGESREFRHLIRMMLMRTNRGFRL. A helical membrane pass occupies residues 388-408; sequence DVSWFMQMSLPTLMAMVRTSG. The Extracellular segment spans residues 409–420; sequence QYFLLLQNVNQK.

Belongs to the insect chemoreceptor superfamily. Heteromeric odorant receptor channel (TC 1.A.69) family. Or63a subfamily. As to quaternary structure, interacts with Orco. Complexes exist early in the endomembrane system in olfactory sensory neurons (OSNs), coupling these complexes to the conserved ciliary trafficking pathway.

The protein localises to the cell membrane. In terms of biological role, odorant receptor which mediates acceptance or avoidance behavior, depending on its substrates. The odorant receptor repertoire encodes a large collection of odor stimuli that vary widely in identity, intensity, and duration. May form a complex with Orco to form odorant-sensing units, providing sensitive and prolonged odorant signaling and calcium permeability. Involved in the behavioral responses to butyl acetate, isoamyl acetate, and hexanoic acid. In Drosophila melanogaster (Fruit fly), this protein is Odorant receptor 63a (Or63a).